The chain runs to 410 residues: Diguanylate cyclase DgcM (410 aa).

2 consecutive PAS domains span residues 3 to 70 (THNF…NQHD) and 129 to 198 (GFYA…HLPG). A PAC domain is found at 199–251 (GHKPLNFIHKLADGSTRHVQTYAGPIEIYGDKLMLCIVHDITEQKRLEEQLEH). The GGDEF domain occupies 283-410 (QDYSLLLIDT…NDGRNRVLAA (128 aa)). Asp-291 is a Mg(2+) binding site. The substrate site is built by Asn-299, His-304, and Asp-308. Residue Glu-334 coordinates Mg(2+). Glu-334 acts as the Proton acceptor in catalysis.

The cofactor is Mg(2+).

The catalysed reaction is 2 GTP = 3',3'-c-di-GMP + 2 diphosphate. Its pathway is purine metabolism; 3',5'-cyclic di-GMP biosynthesis. In terms of biological role, part of a signaling cascade that regulates curli biosynthesis. The cascade is composed of two cyclic-di-GMP (c-di-GMP) control modules, in which c-di-GMP controlled by the DgcE/PdeH pair (module I) regulates the activity of the DgcM/PdeR pair (module II), which in turn regulates activity of the transcription factor MlrA and expression of the master biofilm regulator csgD. In Escherichia coli O157:H7, this protein is Diguanylate cyclase DgcM.